A 603-amino-acid chain; its full sequence is NADPH-dependent diflavin oxidoreductase 1 (603 aa).

In terms of domain architecture, Flavodoxin-like spans 8 to 152; sequence VLVLYGSETG…SFVRWTGRLY (145 aa). FMN is bound by residues 14–19, 61–64, 99–108, and glutamate 134; these read SETGNA, STTG, and LGDSTYLKFN. The 248-residue stretch at 210–457 folds into the FAD-binding FR-type domain; sequence PDGWTATLVG…RKPVLSPIHG (248 aa). Residues arginine 358, 388-391, and 429-432 each bind FAD; these read RDFS and GLCS. NADP(+) is bound by residues threonine 472, 528 to 529, and 534 to 538; these read SR and KIYVQ. Tryptophan 603 is a binding site for FAD.

The protein belongs to the NADPH-dependent diflavin oxidoreductase NDOR1 family. In the N-terminal section; belongs to the flavodoxin family. It in the C-terminal section; belongs to the flavoprotein pyridine nucleotide cytochrome reductase family. Interacts with DRE2; as part of the cytosolic iron-sulfur (Fe-S) protein assembly (CIA) machinery. Requires FAD as cofactor. It depends on FMN as a cofactor.

It localises to the cytoplasm. The protein resides in the mitochondrion. The catalysed reaction is 2 oxidized [2Fe-2S]-[protein] + NADPH = 2 reduced [2Fe-2S]-[protein] + NADP(+) + H(+). NADPH-dependent reductase which is a central component of the cytosolic iron-sulfur (Fe-S) protein assembly (CIA) machinery. Transfers electrons from NADPH via its FAD and FMN prosthetic groups to the [2Fe-2S] cluster of DRE2, another key component of the CIA machinery. In turn, this reduced cluster provides electrons for assembly of cytosolic iron-sulfur cluster proteins. Positively controls H(2)O(2)-induced cell death. This is NADPH-dependent diflavin oxidoreductase 1 from Gibberella zeae (strain ATCC MYA-4620 / CBS 123657 / FGSC 9075 / NRRL 31084 / PH-1) (Wheat head blight fungus).